The chain runs to 311 residues: Tricarboxylate transport protein, mitochondrial (311 aa).

Positions 1-13 (MAAARAPRALTSA) are cleaved as a propeptide — removed in mature form. Over residues 1-15 (MAAARAPRALTSASP) the composition is skewed to low complexity. The disordered stretch occupies residues 1–22 (MAAARAPRALTSASPGSGKAKL). 3 Solcar repeats span residues 23 to 111 (THPG…LSNH), 122 to 208 (TRGL…LRNW), and 218 to 303 (MNPL…VVKL). Helical transmembrane passes span 29–46 (ILAG…TFPT), 86–105 (GLSS…FGTF), and 129–143 (LGAG…VCPM). Serine 156 carries the phosphoserine modification. The next 3 helical transmembrane spans lie at 183–202 (GLTA…FFVM), 224–241 (GVFG…NTPL), and 278–297 (GTVP…FIIY).

This sequence belongs to the mitochondrial carrier (TC 2.A.29) family. Post-translationally, possesses a short cleavable presequence, which, however, is found to be dispensable both for targeting to mitochondria and insertion into the inner membrane. However, the presequence is required to keep SLC25A1 in a soluble state and thus in an import-competent state. Mature SLC25A1 lacking the presequence is prone to aggregation.

Its subcellular location is the mitochondrion inner membrane. It is found in the mitochondrion membrane. It carries out the reaction (S)-malate(in) + citrate(out) = (S)-malate(out) + citrate(in). It catalyses the reaction D-threo-isocitrate(in) + citrate(out) = D-threo-isocitrate(out) + citrate(in). The enzyme catalyses citrate(out) + succinate(in) = citrate(in) + succinate(out). The catalysed reaction is phosphoenolpyruvate(in) + citrate(out) = phosphoenolpyruvate(out) + citrate(in). It carries out the reaction cis-aconitate(in) + citrate(out) = cis-aconitate(out) + citrate(in). It catalyses the reaction trans-aconitate(in) + citrate(out) = trans-aconitate(out) + citrate(in). The enzyme catalyses maleate(in) + citrate(out) = maleate(out) + citrate(in). Functionally, mitochondrial electroneutral antiporter that exports citrate from the mitochondria into the cytosol in exchange for malate. Also able to mediate the exchange of citrate for isocitrate, phosphoenolpyruvate, cis-aconitate and to a lesser extent trans-aconitate, maleate and succinate. In the cytoplasm, citrate plays important roles in fatty acid and sterol synthesis, regulation of glycolysis, protein acetylation, and other physiopathological processes. This Bos taurus (Bovine) protein is Tricarboxylate transport protein, mitochondrial (SLC25A1).